The following is a 220-amino-acid chain: 7-cyano-7-deazaguanine synthase (220 aa).

10–20 (FSGGQDSTTCL) contacts ATP. The Zn(2+) site is built by Cys186, Cys195, Cys198, and Cys201.

It belongs to the QueC family. Homodimer. Requires Zn(2+) as cofactor.

The catalysed reaction is 7-carboxy-7-deazaguanine + NH4(+) + ATP = 7-cyano-7-deazaguanine + ADP + phosphate + H2O + H(+). Its pathway is purine metabolism; 7-cyano-7-deazaguanine biosynthesis. Functionally, catalyzes the ATP-dependent conversion of 7-carboxy-7-deazaguanine (CDG) to 7-cyano-7-deazaguanine (preQ(0)). This chain is 7-cyano-7-deazaguanine synthase, found in Bacillus anthracis (strain A0248).